We begin with the raw amino-acid sequence, 103 residues long: Large ribosomal subunit protein bL21 (103 aa).

The protein belongs to the bacterial ribosomal protein bL21 family. In terms of assembly, part of the 50S ribosomal subunit. Contacts protein L20.

In terms of biological role, this protein binds to 23S rRNA in the presence of protein L20. This is Large ribosomal subunit protein bL21 from Rhodococcus jostii (strain RHA1).